The chain runs to 116 residues: MRYVAAYLLAVLGGNANPSAGDIKKILGSVGIDAEDERLNKVIGELKGKDIEEVMAAGRGKLSSMPSGGGVAAAAGGGGAAAGGGGAAPAAEEKKEEKKEESEEESDDDMGFGLFD.

The segment at 60-116 (GKLSSMPSGGGVAAAAGGGGAAAGGGGAAPAAEEKKEEKKEESEEESDDDMGFGLFD) is disordered. A compositionally biased stretch (gly residues) spans 67–87 (SGGGVAAAAGGGGAAAGGGGA). Over residues 91–101 (AEEKKEEKKEE) the composition is skewed to basic and acidic residues.

This sequence belongs to the eukaryotic ribosomal protein P1/P2 family. As to quaternary structure, P1 and P2 exist as dimers at the large ribosomal subunit. In terms of processing, phosphorylated.

Plays an important role in the elongation step of protein synthesis. This is Large ribosomal subunit protein P2 from Branchiostoma floridae (Florida lancelet).